Reading from the N-terminus, the 125-residue chain is Large ribosomal subunit protein eL8 (125 aa).

Belongs to the eukaryotic ribosomal protein eL8 family. As to quaternary structure, part of the 50S ribosomal subunit. Probably part of the RNase P complex.

It is found in the cytoplasm. Multifunctional RNA-binding protein that recognizes the K-turn motif in ribosomal RNA, the RNA component of RNase P, box H/ACA, box C/D and box C'/D' sRNAs. This chain is Large ribosomal subunit protein eL8, found in Nanoarchaeum equitans (strain Kin4-M).